Consider the following 115-residue polypeptide: Transmembrane protein 218 (115 aa).

The next 3 helical transmembrane spans lie at 5-25 (VLGVGAGVFILALLWVAVLLL), 38-58 (FSVIFLFFGAVIITSVLLLFP), and 81-101 (YVLLAFLSAIFLGGLFLVLIH).

This sequence belongs to the TMEM218 family. Interacts with TMEM67.

It is found in the membrane. The protein resides in the cell projection. It localises to the cilium. Functionally, may be involved in ciliary biogenesis or function. The chain is Transmembrane protein 218 (TMEM218) from Homo sapiens (Human).